The chain runs to 138 residues: Putative phosphatidylinositol 3,4,5-trisphosphate 3-phosphatase TPTE2P1 (138 aa).

Positions M1–V75 constitute a C2 tensin-type domain.

This is Putative phosphatidylinositol 3,4,5-trisphosphate 3-phosphatase TPTE2P1 (TPTE2P1) from Homo sapiens (Human).